The sequence spans 278 residues: Elongation factor Ts (278 aa).

An involved in Mg(2+) ion dislocation from EF-Tu region spans residues 79–82 (TDFV).

The protein belongs to the EF-Ts family.

The protein resides in the cytoplasm. Associates with the EF-Tu.GDP complex and induces the exchange of GDP to GTP. It remains bound to the aminoacyl-tRNA.EF-Tu.GTP complex up to the GTP hydrolysis stage on the ribosome. The polypeptide is Elongation factor Ts (Borrelia recurrentis (strain A1)).